The sequence spans 180 residues: MNLCGSRGEHPGGEYAGLYCTRHDTPAHQALMNDAERYFAAALCAISTEAYEAFIHSPSERPCASLWGRAKDAFGRMCGELAADRQRPPSVPPIRRAVLSLLREQCMPDPQSHLELSERLILMAYWCCLGHAGLPTIGLSPDNKCIRAELYDRPGGICHRLFDAYLGCGSLGVPRTYERS.

Belongs to the herpesviridae US10 family. Phosphorylated.

Its subcellular location is the virion tegument. The protein resides in the host nucleus matrix. The chain is Virion protein US10 homolog (64) from Varicella-zoster virus (strain Dumas) (HHV-3).